The sequence spans 360 residues: DNA replication and repair protein RecF (360 aa).

30–37 (GQNGSGKT) contributes to the ATP binding site.

It belongs to the RecF family.

Its subcellular location is the cytoplasm. Its function is as follows. The RecF protein is involved in DNA metabolism; it is required for DNA replication and normal SOS inducibility. RecF binds preferentially to single-stranded, linear DNA. It also seems to bind ATP. The sequence is that of DNA replication and repair protein RecF from Shewanella sp. (strain MR-7).